Here is a 1139-residue protein sequence, read N- to C-terminus: Integrin alpha ina-1 (1139 aa).

Positions 1 to 19 are cleaved as a signal peptide; it reads MRECIISWTLLLCLSCVKS. The Extracellular segment spans residues 20–1084; that stretch reads FNLDVNAPIY…PTIGDSRPIP (1065 aa). Residues 21 to 85 form an FG-GAP 1 repeat; sequence NLDVNAPIYR…CDINTFYNGG (65 aa). Residues asparagine 108 and asparagine 136 are each glycosylated (N-linked (GlcNAc...) asparagine). FG-GAP repeat units follow at residues 111–171, 180–231, 242–302, 307–370, 378–438, and 448–510; these read RGRT…LQST, LPTT…IFDS, NGDM…SSSK, EDKF…QRKQ, HPPK…IEKF, and GNDL…MEKR. N-linked (GlcNAc...) asparagine glycosylation occurs at asparagine 313. N-linked (GlcNAc...) asparagine glycosylation is found at asparagine 580, asparagine 788, asparagine 851, and asparagine 1026. The chain crosses the membrane as a helical span at residues 1085-1106; the sequence is WWIYVIAAVIGVLILSLIIICL. The Cytoplasmic portion of the chain corresponds to 1107–1139; that stretch reads SKCGFFKRNRLDQPSLYTAQLKHEREEWADTGL.

The protein belongs to the integrin alpha chain family. As to quaternary structure, heterodimer of an alpha and a beta subunit. Alpha ina-1 associates with beta pat-3. Interacts (via cytoplasmic domain) with src-1 (when phosphorylated at 'Tyr-416').

The protein resides in the membrane. It is found in the cell projection. It localises to the phagocytic cup. Its subcellular location is the cytoplasmic vesicle. The protein localises to the phagosome membrane. Its function is as follows. Plays a role in cell migration, axon fasciculation, and morphogenesis. During gonad morphogenesis, involved in distal tip cell (DTC)-mediated guidance of gonad elongation, in maintaining their sharp tapering morphology and in their migration. Involved in the anterior-posterior positioning of QR neuroblast descendants by regulating the migratory speed of QR.p. Probably by acting as a receptor for apoptotic cells, plays a role in the clearance of apoptotic cells during mid-embryogenesis. This is Integrin alpha ina-1 (ina-1) from Caenorhabditis elegans.